A 665-amino-acid chain; its full sequence is F-box/WD repeat-containing protein lin-23 (665 aa).

Residues 81–127 (RDFISNLPAHLVELILFNVNSDSLKSCEEVSTSWRCALARGQHWKKL) form the F-box domain. 7 WD repeats span residues 220–257 (ENSK…CSRI), 260–299 (GHTG…KTLI), 301–337 (HCEA…DITI), 343–380 (GHRA…FVRT), 383–420 (GHRR…CLRV), 423–460 (GHEE…DPRA), and 472–509 (QHTG…PSGL). The tract at residues 574 to 665 (AAAEAARGAG…VDEEMPDGGP (92 aa)) is disordered. Acidic residues-rich tracts occupy residues 584–595 (DNDESSSEEDLD) and 655–665 (DVDEEMPDGGP).

Part of a SCF (SKP1-cullin-F-box) protein ligase complex.

The protein localises to the cytoplasm. In terms of biological role, functions cell autonomously to negatively regulate cell cycle progression. Required to restrain cell proliferation in response to developmental cues. Probably recognizes and binds to some proteins and promotes their ubiquitination and degradation. This Caenorhabditis elegans protein is F-box/WD repeat-containing protein lin-23 (lin-23).